The following is a 95-amino-acid chain: Blastocyst protein 4 (95 aa).

Residues 1-20 (MGAVFAIIGGFALDSPILRL) form the signal peptide.

The sequence is that of Blastocyst protein 4 from Oryctolagus cuniculus (Rabbit).